A 176-amino-acid chain; its full sequence is NAD(P)H-quinone oxidoreductase subunit 6, chloroplastic (176 aa).

A run of 5 helical transmembrane segments spans residues F10 to T30, P32 to P52, A61 to M81, L92 to I112, and F152 to A172.

Belongs to the complex I subunit 6 family. NDH is composed of at least 16 different subunits, 5 of which are encoded in the nucleus.

The protein resides in the plastid. It is found in the chloroplast thylakoid membrane. It carries out the reaction a plastoquinone + NADH + (n+1) H(+)(in) = a plastoquinol + NAD(+) + n H(+)(out). It catalyses the reaction a plastoquinone + NADPH + (n+1) H(+)(in) = a plastoquinol + NADP(+) + n H(+)(out). NDH shuttles electrons from NAD(P)H:plastoquinone, via FMN and iron-sulfur (Fe-S) centers, to quinones in the photosynthetic chain and possibly in a chloroplast respiratory chain. The immediate electron acceptor for the enzyme in this species is believed to be plastoquinone. Couples the redox reaction to proton translocation, and thus conserves the redox energy in a proton gradient. The chain is NAD(P)H-quinone oxidoreductase subunit 6, chloroplastic (ndhG) from Platanus occidentalis (Sycamore).